The primary structure comprises 396 residues: Elongation factor Tu (396 aa).

Residues 11–205 (KPHVNIGTIG…TVDEYIPTPE (195 aa)) form the tr-type G domain. The segment at 20-27 (GHVDHGKT) is G1. Residue 20-27 (GHVDHGKT) coordinates GTP. Thr27 lines the Mg(2+) pocket. The interval 61-65 (GITIN) is G2. The G3 stretch occupies residues 82-85 (DAPG). Residues 82 to 86 (DAPGH) and 137 to 140 (NKVD) contribute to the GTP site. The G4 stretch occupies residues 137–140 (NKVD). Residues 175–177 (SAL) are G5.

It belongs to the TRAFAC class translation factor GTPase superfamily. Classic translation factor GTPase family. EF-Tu/EF-1A subfamily. In terms of assembly, monomer.

It localises to the cytoplasm. It catalyses the reaction GTP + H2O = GDP + phosphate + H(+). In terms of biological role, GTP hydrolase that promotes the GTP-dependent binding of aminoacyl-tRNA to the A-site of ribosomes during protein biosynthesis. In Lactobacillus gasseri (strain ATCC 33323 / DSM 20243 / BCRC 14619 / CIP 102991 / JCM 1131 / KCTC 3163 / NCIMB 11718 / NCTC 13722 / AM63), this protein is Elongation factor Tu.